The primary structure comprises 400 residues: tRNA(Ile)-lysidine synthase (400 aa).

ATP is bound at residue 25–30; sequence SGGVDS.

The protein belongs to the tRNA(Ile)-lysidine synthase family.

It localises to the cytoplasm. It catalyses the reaction cytidine(34) in tRNA(Ile2) + L-lysine + ATP = lysidine(34) in tRNA(Ile2) + AMP + diphosphate + H(+). Ligates lysine onto the cytidine present at position 34 of the AUA codon-specific tRNA(Ile) that contains the anticodon CAU, in an ATP-dependent manner. Cytidine is converted to lysidine, thus changing the amino acid specificity of the tRNA from methionine to isoleucine. The polypeptide is tRNA(Ile)-lysidine synthase (Francisella philomiragia subsp. philomiragia (strain ATCC 25017 / CCUG 19701 / FSC 153 / O#319-036)).